We begin with the raw amino-acid sequence, 304 residues long: Coenzyme PQQ synthesis protein B (304 aa).

This sequence belongs to the PqqB family.

It participates in cofactor biosynthesis; pyrroloquinoline quinone biosynthesis. Functionally, may be involved in the transport of PQQ or its precursor to the periplasm. The chain is Coenzyme PQQ synthesis protein B from Pseudomonas aeruginosa (strain UCBPP-PA14).